We begin with the raw amino-acid sequence, 360 residues long: Mannose-1-phosphate guanyltransferase beta-B (360 aa).

The protein belongs to the transferase hexapeptide repeat family.

The enzyme catalyses alpha-D-mannose 1-phosphate + GTP + H(+) = GDP-alpha-D-mannose + diphosphate. It participates in nucleotide-sugar biosynthesis; GDP-alpha-D-mannose biosynthesis; GDP-alpha-D-mannose from alpha-D-mannose 1-phosphate (GTP route): step 1/1. In terms of biological role, catalyzes the formation of GDP-mannose, an essential precursor of glycan moieties of glycoproteins and glycolipids. The chain is Mannose-1-phosphate guanyltransferase beta-B (gmppb-b) from Xenopus laevis (African clawed frog).